The chain runs to 548 residues: Chaperonin GroEL (548 aa).

Residues 30–33 (TLGP), Lys51, 87–91 (DGTTT), Gly415, 479–481 (NAA), and Asp495 each bind ATP.

Belongs to the chaperonin (HSP60) family. Forms a cylinder of 14 subunits composed of two heptameric rings stacked back-to-back. Interacts with the co-chaperonin GroES.

It is found in the cytoplasm. The catalysed reaction is ATP + H2O + a folded polypeptide = ADP + phosphate + an unfolded polypeptide.. Together with its co-chaperonin GroES, plays an essential role in assisting protein folding. The GroEL-GroES system forms a nano-cage that allows encapsulation of the non-native substrate proteins and provides a physical environment optimized to promote and accelerate protein folding. In Aliivibrio fischeri (strain MJ11) (Vibrio fischeri), this protein is Chaperonin GroEL.